Consider the following 160-residue polypeptide: GPI-anchored protein LLG3 (160 aa).

An N-terminal signal peptide occupies residues 1 to 23 (MKITHHCLVSLLSILLLSGFAFS). A glycan (N-linked (GlcNAc...) asparagine) is linked at asparagine 56. The GPI-anchor amidated serine moiety is linked to residue serine 137. Residues 138–160 (HASIPLVSTHVLLITVSILFHLF) constitute a propeptide, removed in mature form.

Expressed in pollen, pollen tubes, sporophytic pistil tissues, in the early stages of female gametophyte development, and in unfertilized, mature ovules.

It is found in the cell membrane. The sequence is that of GPI-anchored protein LLG3 from Arabidopsis thaliana (Mouse-ear cress).